The chain runs to 376 residues: Thymidine kinase (376 aa).

A disordered region spans residues 1–39 (MASYPCHQHASAFDQAARSRGHSNRRTALRPRRQQEATE). Residues 19 to 32 (SRGHSNRRTALRPR) show a composition bias toward basic residues. 56 to 63 (GPHGMGKT) provides a ligand contact to ATP. Glutamate 83 acts as the Proton acceptor in catalysis. Tyrosine 101 and glutamine 125 together coordinate substrate. Arginine 216 contacts ATP. Arginine 222 contacts substrate. Positions 260–280 (GQLSGTAVPPQGAEPQSNAGP) are disordered.

It belongs to the herpesviridae thymidine kinase family. As to quaternary structure, homodimer.

It catalyses the reaction thymidine + ATP = dTMP + ADP + H(+). In terms of biological role, catalyzes the transfer of the gamma-phospho group of ATP to thymidine to generate dTMP in the salvage pathway of pyrimidine synthesis. The dTMP serves as a substrate for DNA polymerase during viral DNA replication. Allows the virus to be reactivated and to grow in non-proliferative cells lacking a high concentration of phosphorylated nucleic acid precursors. This chain is Thymidine kinase, found in Homo sapiens (Human).